Consider the following 119-residue polypeptide: Large ribosomal subunit protein uL14 (119 aa).

The protein belongs to the universal ribosomal protein uL14 family. In terms of assembly, part of the 50S ribosomal subunit. Forms a cluster with proteins L3 and L19. In the 70S ribosome, L14 and L19 interact and together make contacts with the 16S rRNA in bridges B5 and B8.

Its function is as follows. Binds to 23S rRNA. Forms part of two intersubunit bridges in the 70S ribosome. The polypeptide is Large ribosomal subunit protein uL14 (Anaplasma phagocytophilum (strain HZ)).